Reading from the N-terminus, the 591-residue chain is Oxaloacetate decarboxylase alpha chain (591 aa).

The 261-residue stretch at 3-263 folds into the Pyruvate carboxyltransferase domain; sequence IAITDVVLRD…DTGLDILKLE (261 aa). Residues 518–591 form the Biotinyl-binding domain; sequence PAGAGTPVTA…SVGDTLMTLA (74 aa). N6-biotinyllysine is present on Lys557.

In terms of assembly, composed of three chains (alpha, beta, and gamma). The cofactor is biotin.

It carries out the reaction oxaloacetate + 2 Na(+)(in) + H(+) = pyruvate + 2 Na(+)(out) + CO2. Catalyzes the decarboxylation of oxaloacetate coupled to Na(+) translocation. This chain is Oxaloacetate decarboxylase alpha chain (oadA1), found in Salmonella typhi.